Here is a 473-residue protein sequence, read N- to C-terminus: Ornithine aminotransferase, mitochondrial (473 aa).

The N-terminal 32 residues, 1–32 (MAAALARRGGGGLARALARGRGMCSATAAERA), are a transit peptide targeting the mitochondrion. Lys-293 is modified (N6-(pyridoxal phosphate)lysine).

This sequence belongs to the class-III pyridoxal-phosphate-dependent aminotransferase family. As to quaternary structure, homotetramer. It depends on pyridoxal 5'-phosphate as a cofactor.

It is found in the mitochondrion matrix. The enzyme catalyses a 2-oxocarboxylate + L-ornithine = L-glutamate 5-semialdehyde + an L-alpha-amino acid. The protein operates within amino-acid biosynthesis; L-proline biosynthesis; L-glutamate 5-semialdehyde from L-ornithine: step 1/1. Confers drought and oxidative stress tolerance mainly through enhancing ROS-scavenging capacity and Pro pre-accumulation. The chain is Ornithine aminotransferase, mitochondrial (OAT) from Oryza sativa subsp. japonica (Rice).